The following is a 237-amino-acid chain: Deoxyribose-phosphate aldolase (237 aa).

Aspartate 94 functions as the Proton donor/acceptor in the catalytic mechanism. Residue lysine 158 is the Schiff-base intermediate with acetaldehyde of the active site. The active-site Proton donor/acceptor is the lysine 187.

Belongs to the DeoC/FbaB aldolase family. DeoC type 1 subfamily.

The protein resides in the cytoplasm. It carries out the reaction 2-deoxy-D-ribose 5-phosphate = D-glyceraldehyde 3-phosphate + acetaldehyde. It participates in carbohydrate degradation; 2-deoxy-D-ribose 1-phosphate degradation; D-glyceraldehyde 3-phosphate and acetaldehyde from 2-deoxy-alpha-D-ribose 1-phosphate: step 2/2. In terms of biological role, catalyzes a reversible aldol reaction between acetaldehyde and D-glyceraldehyde 3-phosphate to generate 2-deoxy-D-ribose 5-phosphate. In Lactobacillus acidophilus (strain ATCC 700396 / NCK56 / N2 / NCFM), this protein is Deoxyribose-phosphate aldolase.